The chain runs to 99 residues: MMKMKINVDKSLIKAVKTGKVIVGANRTIDAAANGSAKMVVLASNCPEDIKKKIQATDIPVLEYEGTSVELGPVCGKPFTIAAMAILDVGESDILAATA.

This sequence belongs to the eukaryotic ribosomal protein eL30 family.

This Methanosarcina acetivorans (strain ATCC 35395 / DSM 2834 / JCM 12185 / C2A) protein is Large ribosomal subunit protein eL30.